Consider the following 972-residue polypeptide: Mast/stem cell growth factor receptor Kit (972 aa).

The N-terminal stretch at 1-25 (MRGARGAWDFLCVLLLLLRVQTGSS) is a signal peptide. At 26 to 520 (QPSVSPEEAS…QIQPHTLFTP (495 aa)) the chain is on the extracellular side. Ig-like C2-type domains are found at residues 27-112 (PSVS…VFVR), 121-205 (DRSL…LKVR), 212-308 (PVVS…LEVV), 317-410 (PMIN…VYVN), and 413-507 (PEIL…FNFA). Residues Cys58 and Cys97 are joined by a disulfide bond. N-linked (GlcNAc...) asparagine glycans are attached at residues Asn130 and Asn145. Cystine bridges form between Cys136-Cys186, Cys151-Cys183, and Cys233-Cys290. Asn283, Asn300, Asn320, Asn352, Asn367, Asn463, and Asn486 each carry an N-linked (GlcNAc...) asparagine glycan. A disulfide bond links Cys428 and Cys491. The helical transmembrane segment at 521–541 (LLIGFVVVAGMMCIIVMILTY) threads the bilayer. Residues 542–972 (KYLQKPMYEV…SQPLLVRDDV (431 aa)) are Cytoplasmic-facing. Phosphotyrosine is present on residues Tyr543 and Tyr549. Mg(2+) is bound at residue Tyr564. 2 positions are modified to phosphotyrosine; by autocatalysis: Tyr564 and Tyr566. The interval 564–566 (YVY) is important for interaction with phosphotyrosine-binding proteins. The 349-residue stretch at 585–933 (LSFGKTLGAG…ISESTNHIYS (349 aa)) folds into the Protein kinase domain. ATP-binding positions include 592-599 (GAGAFGKV), Lys619, and 667-673 (EYCCYGD). Phosphotyrosine; by autocatalysis is present on residues Tyr699 and Tyr717. The residue at position 726 (Tyr726) is a Phosphotyrosine. 2 positions are modified to phosphoserine; by PKC/PRKCA: Ser737 and Ser742. Catalysis depends on Asp788, which acts as the Proton acceptor. ATP is bound at residue Arg792. Residues Asn793 and Asp806 each coordinate Mg(2+). Ser817 is modified (phosphoserine). The residue at position 819 (Tyr819) is a Phosphotyrosine; by autocatalysis. The residue at position 887 (Ser887) is a Phosphoserine. Tyr896 bears the Phosphotyrosine mark. Residue Tyr932 is modified to Phosphotyrosine; by autocatalysis. Residue Ser955 is modified to Phosphoserine.

Belongs to the protein kinase superfamily. Tyr protein kinase family. CSF-1/PDGF receptor subfamily. In terms of assembly, monomer in the absence of bound KITLG/SCF. Homodimer in the presence of bound KITLG/SCF, forming a heterotetramer with two KITLG/SCF molecules. Interacts (via phosphorylated tyrosine residues) with the adapter proteins GRB2 and GRB7 (via SH2 domain), and SH2B2/APS. Interacts (via C-terminus) with MPDZ (via the tenth PDZ domain). Interacts (via phosphorylated tyrosine residues) with PIK3R1 and PIK3CD. Interacts (via phosphorylated tyrosine) with CRK (isoform Crk-II), FYN, SHC1 and MATK/CHK (via SH2 domain). Interacts with LYN and FES/FPS. Interacts (via phosphorylated tyrosine residues) with the protein phosphatases PTPN6/SHP-1 (via SH2 domain), PTPN11/SHP-2 (via SH2 domain) and PTPRU. Interacts with PLCG1. Interacts with DOK1 and TEC. Interacts with IL1RAP (independent of stimulation with KITLG/SCF). A mast cell-specific KITLG/SCF-induced interleukin-33 signaling complex contains IL1RL1, IL1RAP, KIT and MYD88. Post-translationally, ubiquitinated by SOCS6. KIT is rapidly ubiquitinated after autophosphorylation induced by KITLG/SCF binding, leading to internalization and degradation. Autophosphorylated on tyrosine residues. KITLG/SCF binding promotes autophosphorylation. Phosphorylated tyrosine residues are important for interaction with specific binding partners.

Its subcellular location is the cell membrane. The catalysed reaction is L-tyrosyl-[protein] + ATP = O-phospho-L-tyrosyl-[protein] + ADP + H(+). Its activity is regulated as follows. Present in an inactive conformation in the absence of bound ligand. KITLG/SCF binding leads to dimerization and activation by autophosphorylation on tyrosine residues. Activity is down-regulated by PRKCA-mediated phosphorylation on serine residues. Tyrosine-protein kinase that acts as a cell-surface receptor for the cytokine KITLG/SCF and plays an essential role in the regulation of cell survival and proliferation, hematopoiesis, stem cell maintenance, gametogenesis, mast cell development, migration and function, and in melanogenesis. In response to KITLG/SCF binding, KIT can activate several signaling pathways. Phosphorylates PIK3R1, PLCG1, SH2B2/APS and CBL. Activates the AKT1 signaling pathway by phosphorylation of PIK3R1, the regulatory subunit of phosphatidylinositol 3-kinase. Activated KIT also transmits signals via GRB2 and activation of RAS, RAF1 and the MAP kinases MAPK1/ERK2 and/or MAPK3/ERK1. Promotes activation of STAT family members STAT1, STAT3, STAT5A and STAT5B. Activation of PLCG1 leads to the production of the cellular signaling molecules diacylglycerol and inositol 1,4,5-trisphosphate. KIT signaling is modulated by protein phosphatases, and by rapid internalization and degradation of the receptor. Activated KIT promotes phosphorylation of the protein phosphatases PTPN6/SHP-1 and PTPRU, and of the transcription factors STAT1, STAT3, STAT5A and STAT5B. Promotes phosphorylation of PIK3R1, CBL, CRK (isoform Crk-II), LYN, MAPK1/ERK2 and/or MAPK3/ERK1, PLCG1, SRC and SHC1. The sequence is that of Mast/stem cell growth factor receptor Kit (KIT) from Callithrix jacchus (White-tufted-ear marmoset).